We begin with the raw amino-acid sequence, 325 residues long: Helicase VP6-A (325 aa).

Disordered regions lie at residues 1-127 (MLLA…NGRR) and 174-230 (EGVA…EPAR). Composition is skewed to basic and acidic residues over residues 8–18 (VIKRSSEELKQ), 32–54 (EGGKENKTEPKEESKAEGSKDGE), 61–79 (GQKEEGGKETKDADVDRRI), and 92–105 (PGERANENADRGDG). Lys106 provides a ligand contact to ATP. Over residues 106 to 122 (KVGGGGGDADAGVGATG) the composition is skewed to gly residues. The segment covering 175–229 (GVAEQTERSRDLRRKEKNGTHAKAVERGGRKQRKESHGDAQREGVEEEKTSEEPA) has biased composition (basic and acidic residues).

The protein belongs to the orbivirus VP6 family. As to quaternary structure, homohexamer.

Its subcellular location is the virion. The catalysed reaction is ATP + H2O = ADP + phosphate + H(+). In terms of biological role, ATP dependent RNA helicase essential for RNA packaging and viral transcription. Possesses ss- and dsRNA-binding capacity. The protein is Helicase VP6-A (Segment-9) of Bluetongue virus 13 (isolate USA) (BTV 13).